The chain runs to 1043 residues: Beta-klotho (1043 aa).

At 1–994 (MKTGCAAGSP…ICSFLVEKKP (994 aa)) the chain is on the extracellular side. Glycosyl hydrolase-1 regions lie at residues 77 to 506 (LYDT…DNGF) and 515 to 965 (MKGR…SSGL). N-linked (GlcNAc...) asparagine glycans are attached at residues Asn84, Asn122, Asn161, Asn211, Asn262, Asn308, Asn389, Asn552, Asn609, Asn700, Asn704, and Asn837. The helical transmembrane segment at 995–1015 (LIFFGCCFISTLAVLLSITVF) threads the bilayer. At 1016–1043 (HHQKRRKFQKARNLQNIPLKKGHSRVFS) the chain is on the cytoplasmic side.

The protein belongs to the glycosyl hydrolase 1 family. Klotho subfamily. In terms of assembly, interacts with FGF19; this interaction is direct. Interacts (via C-terminus) with FGF21; this interaction is direct. Interacts with FGFR1 and FGFR4. As to expression, present in liver, muscle and white adipose tissue, but not in kidney (at protein level). Expressed in liver and pancreas, and at lower levels in skin, stomach, skeletal muscle, small intestine and lung.

It localises to the cell membrane. Functionally, contributes to the transcriptional repression of cholesterol 7-alpha-hydroxylase (CYP7A1), the rate-limiting enzyme in bile acid synthesis. Probably inactive as a glycosidase. Increases the ability of FGFR1 and FGFR4 to bind FGF21. This Mus musculus (Mouse) protein is Beta-klotho (Klb).